Here is a 104-residue protein sequence, read N- to C-terminus: Large ribosomal subunit protein bL21 (104 aa).

This sequence belongs to the bacterial ribosomal protein bL21 family. As to quaternary structure, part of the 50S ribosomal subunit. Contacts protein L20.

In terms of biological role, this protein binds to 23S rRNA in the presence of protein L20. This Francisella tularensis subsp. tularensis (strain FSC 198) protein is Large ribosomal subunit protein bL21.